A 655-amino-acid polypeptide reads, in one-letter code: Broad substrate specificity ATP-binding cassette transporter ABCG2 (655 aa).

The Cytoplasmic portion of the chain corresponds to 1–395 (MSSSNVEVFI…KNLLGNPQAS (395 aa)). The ABC transporter domain maps to 37-286 (LSFHNICYRV…FESAGYHCEA (250 aa)). ATP-binding positions include 80–87 (GPTGGGKS), 184–190 (RGVSGGE), Glu-211, and His-243. The residue at position 362 (Thr-362) is a Phosphothreonine; by PIM1. Positions 389-651 (LGNPQASIAQ…TIAYLKLLFL (263 aa)) constitute an ABC transmembrane type-2 domain. Residues 396–416 (IAQIIVTVVLGLVIGAIYFGL) traverse the membrane as a helical segment. At 417 to 428 (KNDSTGIQNRAG) the chain is on the extracellular side. Residues 429 to 449 (VLFFLTTNQCFSSVSAVELFV) traverse the membrane as a helical segment. The Cytoplasmic portion of the chain corresponds to 450–477 (VEKKLFIHEYISGYYRVSSYFLGKLLSD). Residues 478–498 (LLPMRMLPSIIFTCIVYFMLG) form a helical membrane-spanning segment. Over 499–506 (LKPKADAF) the chain is Extracellular. Residues 507–527 (FVMMFTLMMVAYSASSMALAI) traverse the membrane as a helical segment. The Cytoplasmic segment spans residues 528 to 535 (AAGQSVVS). A helical membrane pass occupies residues 536-556 (VATLLMTICFVFMMIFSGLLV). The Extracellular segment spans residues 557 to 630 (NLTTIASWLS…LSPWGLWKNH (74 aa)). Cysteines 592 and 608 form a disulfide. A glycan (N-linked (GlcNAc...) asparagine) is linked at Asn-596. The helical transmembrane segment at 631-651 (VALACMIVIFLTIAYLKLLFL) threads the bilayer. Residues 652–655 (KKYS) are Cytoplasmic-facing.

The protein belongs to the ABC transporter superfamily. ABCG family. Eye pigment precursor importer (TC 3.A.1.204) subfamily. Homodimer; disulfide-linked. The minimal functional unit is a homodimer, but the major oligomeric form in plasma membrane is a homotetramer with possibility of higher order oligomerization up to homododecamers. Post-translationally, N-glycosylated. Glycosylation-deficient ABCG2 is normally expressed and functional. In terms of processing, phosphorylated. Phosphorylation at Thr-362 by PIM1 is induced by drugs like mitoxantrone and is associated with cells increased drug resistance. It regulates the localization to the plasma membrane, the homooligomerization and therefore, the activity of the transporter. As to expression, highly expressed in placenta. Low expression in small intestine, liver and colon. Expressed in brain (at protein level).

Its subcellular location is the cell membrane. The protein resides in the apical cell membrane. It localises to the mitochondrion membrane. It carries out the reaction ATP + H2O + xenobioticSide 1 = ADP + phosphate + xenobioticSide 2.. It catalyses the reaction urate(in) + ATP + H2O = urate(out) + ADP + phosphate + H(+). The catalysed reaction is indoxyl sulfate(in) + ATP + H2O = indoxyl sulfate(out) + ADP + phosphate + H(+). The enzyme catalyses sphing-4-enine 1-phosphate(in) + ATP + H2O = sphing-4-enine 1-phosphate(out) + ADP + phosphate + H(+). It carries out the reaction estrone 3-sulfate(in) + ATP + H2O = estrone 3-sulfate(out) + ADP + phosphate + H(+). It catalyses the reaction dehydroepiandrosterone 3-sulfate(in) + ATP + H2O = dehydroepiandrosterone 3-sulfate(out) + ADP + phosphate + H(+). The catalysed reaction is 4-methylumbelliferone sulfate(in) + ATP + H2O = 4-methylumbelliferone sulfate(out) + ADP + phosphate + H(+). The enzyme catalyses 5,7-dimethyl-2-methylamino-4-(3-pyridylmethyl)-1,3-benzothiazol-6-yl beta-D-glucuronate(in) + ATP + H2O = 5,7-dimethyl-2-methylamino-4-(3-pyridylmethyl)-1,3-benzothiazol-6-yl beta-D-glucuronate(out) + ADP + phosphate + H(+). It carries out the reaction 4-methylumbelliferone beta-D-glucuronate(in) + ATP + H2O = 4-methylumbelliferone beta-D-glucuronate(out) + ADP + phosphate + H(+). It catalyses the reaction 5,7-dimethyl-2-methylamino-4-(3-pyridylmethyl)-1,3-benzothiazol-6-yl sulfate(in) + ATP + H2O = 5,7-dimethyl-2-methylamino-4-(3-pyridylmethyl)-1,3-benzothiazol-6-yl sulfate(out) + ADP + phosphate + H(+). The catalysed reaction is 17beta-estradiol 17-O-(beta-D-glucuronate)(in) + ATP + H2O = 17beta-estradiol 17-O-(beta-D-glucuronate)(out) + ADP + phosphate + H(+). The enzyme catalyses methotrexate(in) + ATP + H2O = methotrexate(out) + ADP + phosphate + H(+). It carries out the reaction riboflavin(in) + ATP + H2O = riboflavin(out) + ADP + phosphate + H(+). It catalyses the reaction pheophorbide a(in) + ATP + H2O = pheophorbide a(out) + ADP + phosphate + H(+). The catalysed reaction is itaconate(in) + ATP + H2O = itaconate(out) + ADP + phosphate + H(+). With respect to regulation, specifically inhibited by the fungal toxin fumitremorgin C and Ko143. Broad substrate specificity ATP-dependent transporter of the ATP-binding cassette (ABC) family that actively extrudes a wide variety of physiological compounds, dietary toxins and xenobiotics from cells. Involved in porphyrin homeostasis, mediating the export of protoporphyrin IX (PPIX) from both mitochondria to cytosol and cytosol to extracellular space, it also functions in the cellular export of heme. Also mediates the efflux of sphingosine-1-P from cells. Acts as a urate exporter functioning in both renal and extrarenal urate excretion. In kidney, it also functions as a physiological exporter of the uremic toxin indoxyl sulfate. Also involved in the excretion of steroids like estrone 3-sulfate/E1S, 3beta-sulfooxy-androst-5-en-17-one/DHEAS, and other sulfate conjugates. Mediates the secretion of the riboflavin and biotin vitamins into milk. Extrudes pheophorbide a, a phototoxic porphyrin catabolite of chlorophyll, reducing its bioavailability. Plays an important role in the exclusion of xenobiotics from the brain. It confers to cells a resistance to multiple drugs and other xenobiotics including mitoxantrone, pheophorbide, camptothecin, methotrexate, azidothymidine, and the anthracyclines daunorubicin and doxorubicin, through the control of their efflux. In placenta, it limits the penetration of drugs from the maternal plasma into the fetus. May play a role in early stem cell self-renewal by blocking differentiation. In inflammatory macrophages, exports itaconate from the cytosol to the extracellular compartment and limits the activation of TFEB-dependent lysosome biogenesis involved in antibacterial innate immune response. The protein is Broad substrate specificity ATP-binding cassette transporter ABCG2 (ABCG2) of Homo sapiens (Human).